The chain runs to 187 residues: Ubiquinone biosynthesis protein COQ4 homolog, mitochondrial (187 aa).

His-77, Asp-78, His-81, and Glu-93 together coordinate Zn(2+).

Belongs to the COQ4 family. As to quaternary structure, component of a multi-subunit COQ enzyme complex. The cofactor is Zn(2+).

Its subcellular location is the mitochondrion inner membrane. It carries out the reaction a 4-hydroxy-3-methoxy-5-(all-trans-polyprenyl)benzoate + H(+) = a 2-methoxy-6-(all-trans-polyprenyl)phenol + CO2. It functions in the pathway cofactor biosynthesis; ubiquinone biosynthesis. In terms of biological role, lyase that catalyzes the C1-decarboxylation of 4-hydroxy-3-methoxy-5-(all-trans-polyprenyl)benzoic acid into 2-methoxy-6-(all-trans-polyprenyl)phenol during ubiquinone biosynthesis. The polypeptide is Ubiquinone biosynthesis protein COQ4 homolog, mitochondrial (Leishmania braziliensis).